The primary structure comprises 421 residues: Pyridinium-3,5-bisthiocarboxylic acid mononucleotide nickel insertion protein (421 aa).

Belongs to the LarC family.

The catalysed reaction is Ni(II)-pyridinium-3,5-bisthiocarboxylate mononucleotide = pyridinium-3,5-bisthiocarboxylate mononucleotide + Ni(2+). In terms of biological role, involved in the biosynthesis of a nickel-pincer cofactor ((SCS)Ni(II) pincer complex). Binds Ni(2+), and functions in nickel delivery to pyridinium-3,5-bisthiocarboxylic acid mononucleotide (P2TMN), to form the mature cofactor. Is thus probably required for the activation of nickel-pincer cofactor-dependent enzymes. This is Pyridinium-3,5-bisthiocarboxylic acid mononucleotide nickel insertion protein from Alkaliphilus metalliredigens (strain QYMF).